The following is a 547-amino-acid chain: Zinc metalloproteinase-disintegrin-like BjussuMP-1 (547 aa).

A propeptide spanning residues 1–133 (EFKVNGEPVV…KKASKLVVTA (133 aa)) is cleaved from the precursor. The Peptidase M12B domain occupies 141 to 337 (RYVEIVVVVD…HNPQCILNEP (197 aa)). Residues Glu-144 and Asp-228 each contribute to the Ca(2+) site. Intrachain disulfides connect Cys-252–Cys-332, Cys-292–Cys-316, and Cys-294–Cys-299. Position 277 (His-277) interacts with Zn(2+). The active site involves Glu-278. Zn(2+)-binding residues include His-281 and His-287. Ca(2+) is bound by residues Cys-332, Asn-335, Val-341, Asn-344, Leu-346, Glu-348, Glu-351, and Asp-354. Positions 339–421 (LTVSGNELLE…DCPRNRFHRN (83 aa)) constitute a Disintegrin domain. Cystine bridges form between Cys-353–Cys-363, Cys-362–Cys-385, Cys-376–Cys-382, Cys-381–Cys-406, Cys-394–Cys-413, Cys-425–Cys-437, Cys-444–Cys-494, Cys-459–Cys-501, Cys-472–Cys-482, Cys-489–Cys-526, and Cys-520–Cys-531. Asn-451 carries N-linked (GlcNAc...) asparagine glycosylation. N-linked (GlcNAc...) asparagine glycosylation occurs at Asn-504.

Belongs to the venom metalloproteinase (M12B) family. P-III subfamily. P-IIIa sub-subfamily. As to quaternary structure, monomer. The cofactor is Zn(2+). In terms of tissue distribution, expressed by the venom gland.

It is found in the secreted. With respect to regulation, completely inhibited by EDTA, EGTA, 1,10-phenanthroline, and partially by beta-mercaptoethanol. Is not inhibited by aprotinin and leupeptin. Its function is as follows. This protein is a zinc metalloprotease from snake venom that causes hemorrhage in mice after intradermal injection. It inhibits platelet aggregation induced by collagen and ADP. Has moderate edema activity, but no myotoxic activity. It hydrolyzes the Aalpha-chain and more slowly the Bbeta-chain of fibrinogen, without affecting the gamma-chains. It also shows proteolytic activity on casein. It is unable to clot plasma. It also shows bactericidal activity against E.coli and S.aureus. This is Zinc metalloproteinase-disintegrin-like BjussuMP-1 from Bothrops jararacussu (Jararacussu).